The sequence spans 308 residues: Porphobilinogen deaminase (308 aa).

Cys240 bears the S-(dipyrrolylmethanemethyl)cysteine mark.

The protein belongs to the HMBS family. Monomer. Dipyrromethane is required as a cofactor.

It catalyses the reaction 4 porphobilinogen + H2O = hydroxymethylbilane + 4 NH4(+). It participates in porphyrin-containing compound metabolism; protoporphyrin-IX biosynthesis; coproporphyrinogen-III from 5-aminolevulinate: step 2/4. Functionally, tetrapolymerization of the monopyrrole PBG into the hydroxymethylbilane pre-uroporphyrinogen in several discrete steps. The sequence is that of Porphobilinogen deaminase from Desulfitobacterium hafniense (strain DSM 10664 / DCB-2).